A 265-amino-acid polypeptide reads, in one-letter code: Ribosomal RNA small subunit methyltransferase A (265 aa).

S-adenosyl-L-methionine-binding residues include histidine 11, leucine 13, glycine 38, glutamate 59, aspartate 83, and asparagine 100.

This sequence belongs to the class I-like SAM-binding methyltransferase superfamily. rRNA adenine N(6)-methyltransferase family. RsmA subfamily.

It is found in the cytoplasm. The catalysed reaction is adenosine(1518)/adenosine(1519) in 16S rRNA + 4 S-adenosyl-L-methionine = N(6)-dimethyladenosine(1518)/N(6)-dimethyladenosine(1519) in 16S rRNA + 4 S-adenosyl-L-homocysteine + 4 H(+). Its function is as follows. Specifically dimethylates two adjacent adenosines (A1518 and A1519) in the loop of a conserved hairpin near the 3'-end of 16S rRNA in the 30S particle. May play a critical role in biogenesis of 30S subunits. This chain is Ribosomal RNA small subunit methyltransferase A, found in Thermosynechococcus vestitus (strain NIES-2133 / IAM M-273 / BP-1).